The chain runs to 61 residues: Small ribosomal subunit protein uS14 (61 aa).

Residues C24, C27, C40, and C43 each coordinate Zn(2+).

The protein belongs to the universal ribosomal protein uS14 family. Zinc-binding uS14 subfamily. Part of the 30S ribosomal subunit. Contacts proteins S3 and S10. Zn(2+) is required as a cofactor.

Functionally, binds 16S rRNA, required for the assembly of 30S particles and may also be responsible for determining the conformation of the 16S rRNA at the A site. This is Small ribosomal subunit protein uS14 from Moorella thermoacetica (strain ATCC 39073 / JCM 9320).